We begin with the raw amino-acid sequence, 337 residues long: GTP 3',8-cyclase (337 aa).

One can recognise a Radical SAM core domain in the interval 1-226 (MNRVDYLRIS…REKIRQKWGL (226 aa)). Residue Arg8 coordinates GTP. 2 residues coordinate [4Fe-4S] cluster: Cys15 and Cys19. S-adenosyl-L-methionine is bound at residue Tyr21. Cys22 is a [4Fe-4S] cluster binding site. Arg60 contributes to the GTP binding site. Residue Gly64 coordinates S-adenosyl-L-methionine. Thr91 lines the GTP pocket. S-adenosyl-L-methionine is bound at residue Ser115. Position 155 (Lys155) interacts with GTP. Residue Met189 participates in S-adenosyl-L-methionine binding. [4Fe-4S] cluster is bound by residues Cys260 and Cys263. 265–267 (RMR) contributes to the GTP binding site. Cys277 provides a ligand contact to [4Fe-4S] cluster.

It belongs to the radical SAM superfamily. MoaA family. In terms of assembly, monomer and homodimer. It depends on [4Fe-4S] cluster as a cofactor.

The enzyme catalyses GTP + AH2 + S-adenosyl-L-methionine = (8S)-3',8-cyclo-7,8-dihydroguanosine 5'-triphosphate + 5'-deoxyadenosine + L-methionine + A + H(+). It functions in the pathway cofactor biosynthesis; molybdopterin biosynthesis. Its function is as follows. Catalyzes the cyclization of GTP to (8S)-3',8-cyclo-7,8-dihydroguanosine 5'-triphosphate. This is GTP 3',8-cyclase from Crocosphaera subtropica (strain ATCC 51142 / BH68) (Cyanothece sp. (strain ATCC 51142)).